The following is a 215-amino-acid chain: MQEVKAFNEKRAEIYWWFSSLFAKELSEKELETYHSVEIRSFLAGLGENESLKPAVDSLVDALNRLQDRNDAQLELAADFCELFLKTDKYGALPYASMYIGESGLLNDKPAEEMEKLMADFGVQVDENLKEPADHLAVELDFLGNMIIRSNELEQEKHMEEAFVKQNDFIQNQLMSWLPKFAEKCKQFDEFGFYLSVAQLLIAFCKLDSAYLLGE.

The protein belongs to the TorD/DmsD family. TorD subfamily.

It localises to the cytoplasm. Involved in the biogenesis of TorA. Acts on TorA before the insertion of the molybdenum cofactor and, as a result, probably favors a conformation of the apoenzyme that is competent for acquiring the cofactor. This is Chaperone protein TorD from Vibrio parahaemolyticus serotype O3:K6 (strain RIMD 2210633).